Here is a 254-residue protein sequence, read N- to C-terminus: Bacteriorhodopsin-I (254 aa).

The propeptide occupies 1–6 (MSQLAL). Gln-7 carries the pyrrolidone carboxylic acid modification. A run of 7 helical transmembrane segments spans residues 16-36 (EGIW…YFIA), 51-71 (VITI…FFGF), 91-111 (YADW…LAGA), 116-136 (IGAL…ATLT), 144-164 (AFWT…VAVF), 185-205 (IILV…EGLA), and 212-232 (ETLL…FILL). The residue at position 224 (Lys-224) is an N6-(retinylidene)lysine.

This sequence belongs to the archaeal/bacterial/fungal opsin family. In terms of processing, the covalent binding of retinal to the apoprotein, bacterioopsin, generates bacteriorhodopsin.

Its subcellular location is the cell membrane. Light-driven proton pump. The chain is Bacteriorhodopsin-I (bop1) from Haloquadratum walsbyi (strain DSM 16854 / JCM 12705 / C23).